A 301-amino-acid chain; its full sequence is Ornithine carbamoyltransferase (301 aa).

Carbamoyl phosphate is bound by residues 53 to 56 (STRT), Q80, R104, and 131 to 134 (HPCQ). Residues N162, D221, and 225 to 226 (SI) each bind L-ornithine. Carbamoyl phosphate contacts are provided by residues 260-261 (CL) and R288.

The protein belongs to the aspartate/ornithine carbamoyltransferase superfamily. OTCase family.

It localises to the cytoplasm. It catalyses the reaction carbamoyl phosphate + L-ornithine = L-citrulline + phosphate + H(+). It participates in amino-acid biosynthesis; L-arginine biosynthesis; L-arginine from L-ornithine and carbamoyl phosphate: step 1/3. Functionally, reversibly catalyzes the transfer of the carbamoyl group from carbamoyl phosphate (CP) to the N(epsilon) atom of ornithine (ORN) to produce L-citrulline. The chain is Ornithine carbamoyltransferase from Cenarchaeum symbiosum (strain A).